The primary structure comprises 173 residues: Crossover junction endodeoxyribonuclease RuvC (173 aa).

Catalysis depends on residues D8, E67, and D139. Residues D8, E67, and D139 each contribute to the Mg(2+) site.

This sequence belongs to the RuvC family. Homodimer which binds Holliday junction (HJ) DNA. The HJ becomes 2-fold symmetrical on binding to RuvC with unstacked arms; it has a different conformation from HJ DNA in complex with RuvA. In the full resolvosome a probable DNA-RuvA(4)-RuvB(12)-RuvC(2) complex forms which resolves the HJ. Requires Mg(2+) as cofactor.

The protein localises to the cytoplasm. It carries out the reaction Endonucleolytic cleavage at a junction such as a reciprocal single-stranded crossover between two homologous DNA duplexes (Holliday junction).. Functionally, the RuvA-RuvB-RuvC complex processes Holliday junction (HJ) DNA during genetic recombination and DNA repair. Endonuclease that resolves HJ intermediates. Cleaves cruciform DNA by making single-stranded nicks across the HJ at symmetrical positions within the homologous arms, yielding a 5'-phosphate and a 3'-hydroxyl group; requires a central core of homology in the junction. The consensus cleavage sequence is 5'-(A/T)TT(C/G)-3'. Cleavage occurs on the 3'-side of the TT dinucleotide at the point of strand exchange. HJ branch migration catalyzed by RuvA-RuvB allows RuvC to scan DNA until it finds its consensus sequence, where it cleaves and resolves the cruciform DNA. This chain is Crossover junction endodeoxyribonuclease RuvC, found in Vibrio cholerae serotype O1 (strain ATCC 39541 / Classical Ogawa 395 / O395).